Consider the following 307-residue polypeptide: Acyl transferase (307 aa).

Residues Ser116, Asp213, and His243 each act as charge relay system in the active site.

The protein belongs to the LuxD family.

It functions in the pathway lipid metabolism; fatty acid reduction for biolumincescence. Acyl transferase is part of the fatty acid reductase system required for aldehyde biosynthesis; it produces fatty acids for the luminescent reaction. This Aliivibrio fischeri (Vibrio fischeri) protein is Acyl transferase.